The primary structure comprises 927 residues: DIS3-like exonuclease 2 (927 aa).

Over residues 1 to 12 (MDLKPNIRRKEK) the composition is skewed to basic residues. The disordered stretch occupies residues 1 to 168 (MDLKPNIRRK…DTNNATEMVS (168 aa)). Residues 13–31 (RNLLKGEAALEKKGSIDRK) are compositionally biased toward basic and acidic residues. A compositionally biased stretch (basic residues) spans 97-106 (VKPKAKKKNS). A compositionally biased stretch (basic and acidic residues) spans 107–152 (KEKISKSSKQDEHKTDVHKESVSKLSKNLESRNNRDENSAKREKNN). The span at 153–168 (SHQVEADTNNATEMVS) shows a compositional bias: polar residues. Mg(2+) contacts are provided by D453 and D462.

The protein belongs to the RNR ribonuclease family. DIS3L2 subfamily. Requires Mg(2+) as cofactor. Mn(2+) serves as cofactor.

The protein localises to the cytoplasm. It localises to the P-body. Its function is as follows. 3'-5'-exoribonuclease that specifically recognizes RNAs polyuridylated at their 3' end and mediates their degradation. Component of an exosome-independent RNA degradation pathway that mediates degradation of cytoplasmic mRNAs that have been deadenylated and subsequently uridylated at their 3'. This chain is DIS3-like exonuclease 2 (dis32), found in Schizosaccharomyces pombe (strain 972 / ATCC 24843) (Fission yeast).